The primary structure comprises 525 residues: GMP synthase [glutamine-hydrolyzing] (525 aa).

Positions 9–207 (RILILDFGSQ…VLDICGCAAL (199 aa)) constitute a Glutamine amidotransferase type-1 domain. The active-site Nucleophile is Cys86. Residues His181 and Glu183 contribute to the active site. The region spanning 208 to 400 (WTPSNIVDDA…LGLPYDMVYR (193 aa)) is the GMPS ATP-PPase domain. Residue 235 to 241 (SGGVDSS) coordinates ATP.

In terms of assembly, homodimer.

The enzyme catalyses XMP + L-glutamine + ATP + H2O = GMP + L-glutamate + AMP + diphosphate + 2 H(+). Its pathway is purine metabolism; GMP biosynthesis; GMP from XMP (L-Gln route): step 1/1. Catalyzes the synthesis of GMP from XMP. The polypeptide is GMP synthase [glutamine-hydrolyzing] (Pseudomonas aeruginosa (strain UCBPP-PA14)).